We begin with the raw amino-acid sequence, 199 residues long: Recombination protein RecR (199 aa).

A C4-type zinc finger spans residues 58 to 73 (CQRCFHLSSEDLCNIC). One can recognise a Toprim domain in the interval 81–175 (QTICVVADPR…RVTRIAFGLP (95 aa)).

The protein belongs to the RecR family.

Functionally, may play a role in DNA repair. It seems to be involved in an RecBC-independent recombinational process of DNA repair. It may act with RecF and RecO. The chain is Recombination protein RecR from Synechococcus elongatus (strain ATCC 33912 / PCC 7942 / FACHB-805) (Anacystis nidulans R2).